A 20-amino-acid polypeptide reads, in one-letter code: Beta-fibrinogenase jerdofibrase (20 aa).

One can recognise a Peptidase S1 domain in the interval 1–20 (VIGGDECNINEHPFLVLVYY).

It belongs to the peptidase S1 family. Snake venom subfamily. As to quaternary structure, monomer. As to expression, expressed by the venom gland.

It is found in the secreted. With respect to regulation, inhibited by PMSF and soybean trypsin inhibitor. Partially inhibited by DTT and cysteine. Not affected by EDTA. In terms of biological role, fibrin(ogen)olytic serine protease degrades Bbeta-chain of human fibrinogen (FGB) and shows a lower activity on Aa-chain (FGA). Also degrades fibrin directly. Releases fibrinopeptide B and a small amount of fibrinopeptide A. Has also be shown to catalyze the hydrolysis of some chromogenic substrates such as S2238, S2160, S2302 and S2251. The chain is Beta-fibrinogenase jerdofibrase from Protobothrops jerdonii (Jerdon's pitviper).